The sequence spans 201 residues: 3-isopropylmalate dehydratase small subunit (201 aa).

This sequence belongs to the LeuD family. LeuD type 1 subfamily. Heterodimer of LeuC and LeuD.

The catalysed reaction is (2R,3S)-3-isopropylmalate = (2S)-2-isopropylmalate. It participates in amino-acid biosynthesis; L-leucine biosynthesis; L-leucine from 3-methyl-2-oxobutanoate: step 2/4. In terms of biological role, catalyzes the isomerization between 2-isopropylmalate and 3-isopropylmalate, via the formation of 2-isopropylmaleate. The chain is 3-isopropylmalate dehydratase small subunit from Rhodopseudomonas palustris (strain HaA2).